Consider the following 613-residue polypeptide: UvrABC system protein C (613 aa).

The GIY-YIG domain maps to 12–89 (DHPGVYIMHD…IKQHRPRYNV (78 aa)). The region spanning 199–234 (TALVKELKEQMEAAAARLEFEKAARLRDQLRAVQEV) is the UVR domain.

It belongs to the UvrC family. In terms of assembly, interacts with UvrB in an incision complex.

It localises to the cytoplasm. The UvrABC repair system catalyzes the recognition and processing of DNA lesions. UvrC both incises the 5' and 3' sides of the lesion. The N-terminal half is responsible for the 3' incision and the C-terminal half is responsible for the 5' incision. The polypeptide is UvrABC system protein C (Moorella thermoacetica (strain ATCC 39073 / JCM 9320)).